The chain runs to 489 residues: Mitochondrial-processing peptidase subunit beta (489 aa).

The N-terminal 43 residues, 1-43 (MAAAAARVVLSSAARRRLWGFSESLLIRGAAGRSLYFGENRLR), are a transit peptide targeting the mitochondrion. Position 101 (His101) interacts with Zn(2+). Residue Glu104 is the Proton acceptor of the active site. Zn(2+)-binding residues include His105 and Glu181.

Belongs to the peptidase M16 family. As to quaternary structure, heterodimer of PMPCA (alpha) and PMPCB (beta) subunits, forming the mitochondrial processing protease (MPP) in which PMPCA is involved in substrate recognition and binding and PMPCB is the catalytic subunit. Zn(2+) serves as cofactor.

It is found in the mitochondrion matrix. The catalysed reaction is Release of N-terminal transit peptides from precursor proteins imported into the mitochondrion, typically with Arg in position P2.. With respect to regulation, binding to PMPCA is required for catalytic activity. Catalytic subunit of the essential mitochondrial processing protease (MPP), which cleaves the mitochondrial sequence off newly imported precursors proteins. Preferentially, cleaves after an arginine at position P2. Required for PINK1 turnover by coupling PINK1 mitochondrial import and cleavage, which results in subsequent PINK1 proteolysis. The protein is Mitochondrial-processing peptidase subunit beta (PMPCB) of Homo sapiens (Human).